The following is a 2931-amino-acid chain: Probable polyketide synthase 9/36 (2931 aa).

The 432-residue stretch at 11 to 442 (EKGVAIVGIG…GSNCCLLISE (432 aa)) folds into the Ketosynthase family 3 (KS3) domain. Active-site for beta-ketoacyl synthase activity residues include cysteine 181, histidine 323, and histidine 362. The interval 635-668 (GVNPSFILGHSLGEISASYCSGMIDLDTFCYTVY) is acyl/malonyl transferase. Residue serine 645 is the For acyl/malonyl transferase activity of the active site. The tract at residues 925 to 1047 (IDHLGTSNSY…ANFQLLDHGN (123 aa)) is N-terminal hotdog fold. In terms of domain architecture, PKS/mFAS DH spans 925-1209 (IDHLGTSNSY…CKSLIPIKDS (285 aa)). The active-site Proton acceptor; for dehydratase activity is histidine 959. A C-terminal hotdog fold region spans residues 1064 to 1209 (NLSKLTKNEL…CKSLIPIKDS (146 aa)). Residue aspartate 1122 is the Proton donor; for dehydratase activity of the active site. The helical transmembrane segment at 2293–2313 (LINFVMASSAISLIGSTDLCT) threads the bilayer. One can recognise a Carrier domain in the interval 2429–2506 (TGNKNIDELF…TSMKMILNSL (78 aa)). Serine 2466 is modified (O-(pantetheine 4'-phosphoryl)serine). The helical transmembrane segment at 2553–2573 (KIILLTGTTGFLGGFLLFNMV) threads the bilayer.

It depends on pantetheine 4'-phosphate as a cofactor.

It is found in the membrane. Functionally, probable polyketide synthase. The polypeptide is Probable polyketide synthase 9/36 (pks9) (Dictyostelium discoideum (Social amoeba)).